The sequence spans 74 residues: Large ribosomal subunit protein bL31 (74 aa).

Positions 16, 18, 38, and 41 each coordinate Zn(2+).

This sequence belongs to the bacterial ribosomal protein bL31 family. Type A subfamily. As to quaternary structure, part of the 50S ribosomal subunit. The cofactor is Zn(2+).

Binds the 23S rRNA. This chain is Large ribosomal subunit protein bL31, found in Acinetobacter baylyi (strain ATCC 33305 / BD413 / ADP1).